Here is a 434-residue protein sequence, read N- to C-terminus: Nicotinate phosphoribosyltransferase (434 aa).

Residue His-242 is modified to Phosphohistidine; by autocatalysis.

It belongs to the NAPRTase family. In terms of processing, transiently phosphorylated on a His residue during the reaction cycle. Phosphorylation strongly increases the affinity for substrates and increases the rate of nicotinate D-ribonucleotide production. Dephosphorylation regenerates the low-affinity form of the enzyme, leading to product release.

It catalyses the reaction nicotinate + 5-phospho-alpha-D-ribose 1-diphosphate + ATP + H2O = nicotinate beta-D-ribonucleotide + ADP + phosphate + diphosphate. It participates in cofactor biosynthesis; NAD(+) biosynthesis; nicotinate D-ribonucleotide from nicotinate: step 1/1. Catalyzes the synthesis of beta-nicotinate D-ribonucleotide from nicotinate and 5-phospho-D-ribose 1-phosphate at the expense of ATP. The sequence is that of Nicotinate phosphoribosyltransferase from Rhizobium etli (strain CIAT 652).